The primary structure comprises 236 residues: 2-C-methyl-D-erythritol 4-phosphate cytidylyltransferase (236 aa).

It belongs to the IspD/TarI cytidylyltransferase family. IspD subfamily. As to quaternary structure, homodimer.

The catalysed reaction is 2-C-methyl-D-erythritol 4-phosphate + CTP + H(+) = 4-CDP-2-C-methyl-D-erythritol + diphosphate. The protein operates within isoprenoid biosynthesis; isopentenyl diphosphate biosynthesis via DXP pathway; isopentenyl diphosphate from 1-deoxy-D-xylulose 5-phosphate: step 2/6. Functionally, catalyzes the formation of 4-diphosphocytidyl-2-C-methyl-D-erythritol from CTP and 2-C-methyl-D-erythritol 4-phosphate (MEP). This is 2-C-methyl-D-erythritol 4-phosphate cytidylyltransferase from Salmonella arizonae (strain ATCC BAA-731 / CDC346-86 / RSK2980).